The primary structure comprises 204 residues: MRYTSAAIEALIDAFAKLPGVGRKTARRLAMHVLQQPRLEAERLASALLDAKDLVVRCSICQNVTDRDADPCRICTGQGRDQSVICVVESPVDVLAFEKTAHYKGLYHVLHGVISPLDGIGPDDINIRELLQRLQPEEGGEVREIVLALNPTVEGETTSLYLSRLIAPLGIMVTKIARGIPVGAELEFIDEATLSRAMEGRTTF.

The C4-type zinc-finger motif lies at 58–75; the sequence is CSICQNVTDRDADPCRIC. Positions 83-181 constitute a Toprim domain; the sequence is SVICVVESPV…MVTKIARGIP (99 aa).

Belongs to the RecR family.

Functionally, may play a role in DNA repair. It seems to be involved in an RecBC-independent recombinational process of DNA repair. It may act with RecF and RecO. This Chlorobium phaeovibrioides (strain DSM 265 / 1930) (Prosthecochloris vibrioformis (strain DSM 265)) protein is Recombination protein RecR.